The sequence spans 369 residues: Aspartate-semialdehyde dehydrogenase (369 aa).

NADP(+)-binding positions include 11-14 (RGMV), 38-39 (TS), and Gln75. A phosphate-binding site is contributed by Arg104. The active-site Acyl-thioester intermediate is Cys137. Position 164 (Gln164) interacts with substrate. NADP(+) is bound by residues 167 to 168 (SG) and Pro195. Position 243 (Glu243) interacts with substrate. Lys246 provides a ligand contact to phosphate. Arg269 contributes to the substrate binding site. Residue His276 is the Proton acceptor of the active site. Position 352 (Gln352) interacts with NADP(+).

Belongs to the aspartate-semialdehyde dehydrogenase family. In terms of assembly, homodimer.

The catalysed reaction is L-aspartate 4-semialdehyde + phosphate + NADP(+) = 4-phospho-L-aspartate + NADPH + H(+). It participates in amino-acid biosynthesis; L-lysine biosynthesis via DAP pathway; (S)-tetrahydrodipicolinate from L-aspartate: step 2/4. It functions in the pathway amino-acid biosynthesis; L-methionine biosynthesis via de novo pathway; L-homoserine from L-aspartate: step 2/3. The protein operates within amino-acid biosynthesis; L-threonine biosynthesis; L-threonine from L-aspartate: step 2/5. Catalyzes the NADPH-dependent formation of L-aspartate-semialdehyde (L-ASA) by the reductive dephosphorylation of L-aspartyl-4-phosphate. The sequence is that of Aspartate-semialdehyde dehydrogenase from Buchnera aphidicola subsp. Baizongia pistaciae (strain Bp).